A 294-amino-acid polypeptide reads, in one-letter code: ATP synthase gamma chain (294 aa).

This sequence belongs to the ATPase gamma chain family. F-type ATPases have 2 components, CF(1) - the catalytic core - and CF(0) - the membrane proton channel. CF(1) has five subunits: alpha(3), beta(3), gamma(1), delta(1), epsilon(1). CF(0) has three main subunits: a, b and c.

The protein localises to the cell inner membrane. Produces ATP from ADP in the presence of a proton gradient across the membrane. The gamma chain is believed to be important in regulating ATPase activity and the flow of protons through the CF(0) complex. The chain is ATP synthase gamma chain from Campylobacter lari (strain RM2100 / D67 / ATCC BAA-1060).